Reading from the N-terminus, the 220-residue chain is Fructose-6-phosphate aldolase (220 aa).

K85 functions as the Schiff-base intermediate with substrate in the catalytic mechanism.

The protein belongs to the transaldolase family. Type 3A subfamily. As to quaternary structure, homodecamer.

Its subcellular location is the cytoplasm. The enzyme catalyses beta-D-fructose 6-phosphate = dihydroxyacetone + D-glyceraldehyde 3-phosphate. Its function is as follows. Catalyzes the reversible formation of fructose 6-phosphate from dihydroxyacetone and D-glyceraldehyde 3-phosphate via an aldolization reaction. The protein is Fructose-6-phosphate aldolase of Enterobacter sp. (strain 638).